Consider the following 209-residue polypeptide: Protein-L-isoaspartate O-methyltransferase (209 aa).

Residue Ser-60 is part of the active site.

The protein belongs to the methyltransferase superfamily. L-isoaspartyl/D-aspartyl protein methyltransferase family.

It is found in the cytoplasm. It carries out the reaction [protein]-L-isoaspartate + S-adenosyl-L-methionine = [protein]-L-isoaspartate alpha-methyl ester + S-adenosyl-L-homocysteine. Catalyzes the methyl esterification of L-isoaspartyl residues in peptides and proteins that result from spontaneous decomposition of normal L-aspartyl and L-asparaginyl residues. It plays a role in the repair and/or degradation of damaged proteins. This chain is Protein-L-isoaspartate O-methyltransferase, found in Methanococcus vannielii (strain ATCC 35089 / DSM 1224 / JCM 13029 / OCM 148 / SB).